Consider the following 287-residue polypeptide: Urease accessory protein UreD (287 aa).

It belongs to the UreD family. UreD, UreF and UreG form a complex that acts as a GTP-hydrolysis-dependent molecular chaperone, activating the urease apoprotein by helping to assemble the nickel containing metallocenter of UreC. The UreE protein probably delivers the nickel.

Its subcellular location is the cytoplasm. Functionally, required for maturation of urease via the functional incorporation of the urease nickel metallocenter. The polypeptide is Urease accessory protein UreD (Aliivibrio fischeri (strain ATCC 700601 / ES114) (Vibrio fischeri)).